The chain runs to 379 residues: Probable G-protein coupled receptor No18 (379 aa).

Topologically, residues 5–36 (EASITGRTAPELNASAAPLDDERELGETVAAT) are extracellular. N-linked (GlcNAc...) asparagine glycosylation is present at asparagine 17. A helical membrane pass occupies residues 37-58 (ALLLAIILVTIVGNSLVIISVF). At 59 to 68 (TYRPLRSVQN) the chain is on the cytoplasmic side. Residues 69–90 (FFVVSLAVADLTVALFVLPLNV) traverse the membrane as a helical segment. The Extracellular segment spans residues 91 to 107 (AYRLLNQWLLGSYLCQM). Cysteine 105 and cysteine 184 are disulfide-bonded. The chain crosses the membrane as a helical span at residues 108 to 128 (WLTCDILCCTSSILNLCVIAL). Over 129–148 (DRYWAITDPINYAQKRTIRR) the chain is Cytoplasmic. The helical transmembrane segment at 149 to 171 (VNTMIAAVWALSLVISVPPLLGW) threads the bilayer. At 172–196 (NDWPAQFTEDTPCTLTQERLFVVYS) the chain is on the extracellular side. Residues 197–218 (SSGSFFIPLIIMSVVYAKIFFA) traverse the membrane as a helical segment. The Cytoplasmic portion of the chain corresponds to 219 to 303 (TKRRLRERTR…LSKERKAARV (85 aa)). The disordered stretch occupies residues 234–276 (AVPAPPQRTSSRPLAELESVASQEDETEPSPEPEPLSSRADKP). A helical membrane pass occupies residues 304–325 (LGVIMGVFVVCWLPFFLMYAIV). At 326-340 (PFCTNCAPPSQRVVD) the chain is on the extracellular side. Residues 341 to 362 (FVTWLGYVNSSLNPIIYTIYNK) traverse the membrane as a helical segment. Residues 363–375 (DFRTAFSRLLRCD) are Cytoplasmic-facing.

It belongs to the G-protein coupled receptor 1 family.

It is found in the cell membrane. Probable G-protein coupled receptor for an amine. The chain is Probable G-protein coupled receptor No18 from Amphibalanus amphitrite (Striped barnacle).